A 391-amino-acid polypeptide reads, in one-letter code: Casein kinase II subunit alpha (391 aa).

Residues 36 to 41 form an interaction with beta subunit region; sequence QDDYQL. Residues 39 to 324 form the Protein kinase domain; that stretch reads YQLVRKLGRG…AREAMEHPYF (286 aa). ATP is bound by residues 45–53 and lysine 68; that span reads LGRGKYSEV. Aspartate 156 acts as the Proton acceptor in catalysis. Phosphothreonine; by CDK1 occurs at positions 344 and 360. Phosphoserine; by CDK1 occurs at positions 362 and 370.

This sequence belongs to the protein kinase superfamily. Ser/Thr protein kinase family. CK2 subfamily. In terms of assembly, heterotetramer composed of two catalytic subunits (alpha chain and/or alpha' chain) and two regulatory subunits (beta chains). The tetramer can exist as a combination of 2 alpha/2 beta, 2 alpha'/2 beta or 1 alpha/1 alpha'/2 beta subunits. Also part of a CK2-SPT16-SSRP1 complex composed of SSRP1, SUPT16H, CSNK2A1, CSNK2A2 and CSNK2B, which forms following UV irradiation. Interacts with RNPS1. Interacts with SNAI1. Interacts with PML. Interacts with CCAR2. Interacts with HIRIP3. In terms of processing, phosphorylated at Thr-344, Thr-360, Ser-362 and Ser-370 by CDK1 in prophase and metaphase and dephosphorylated during anaphase. Phosphorylation does not directly affect casein kinase 2 activity, but may contribute to its regulation by forming binding sites for interacting proteins and/or targeting it to different compartments.

Its subcellular location is the nucleus. The catalysed reaction is L-seryl-[protein] + ATP = O-phospho-L-seryl-[protein] + ADP + H(+). It carries out the reaction L-threonyl-[protein] + ATP = O-phospho-L-threonyl-[protein] + ADP + H(+). Its activity is regulated as follows. Constitutively active protein kinase whose activity is not directly affected by phosphorylation. Seems to be regulated by level of expression and localization. Functionally, catalytic subunit of a constitutively active serine/threonine-protein kinase complex that phosphorylates a large number of substrates containing acidic residues C-terminal to the phosphorylated serine or threonine. Regulates numerous cellular processes, such as cell cycle progression, apoptosis and transcription, as well as viral infection. May act as a regulatory node which integrates and coordinates numerous signals leading to an appropriate cellular response. During mitosis, functions as a component of the p53/TP53-dependent spindle assembly checkpoint (SAC) that maintains cyclin-B-CDK1 activity and G2 arrest in response to spindle damage. Also required for p53/TP53-mediated apoptosis, phosphorylating 'Ser-392' of p53/TP53 following UV irradiation. Phosphorylates a number of DNA repair proteins in response to DNA damage, such as MDC1, MRE11, RAD9A, RAD51 and HTATSF1, promoting their recruitment to DNA damage sites. Can also negatively regulate apoptosis. Phosphorylates the caspases CASP9 and CASP2 and the apoptotic regulator NOL3. Phosphorylation protects CASP9 from cleavage and activation by CASP8, and inhibits the dimerization of CASP2 and activation of CASP8. Phosphorylates YY1, protecting YY1 from cleavage by CASP7 during apoptosis. Regulates transcription by direct phosphorylation of RNA polymerases I, II, III and IV. Also phosphorylates and regulates numerous transcription factors including NF-kappa-B, STAT1, CREB1, IRF1, IRF2, ATF1, ATF4, SRF, MAX, JUN, FOS, MYC and MYB. Phosphorylates Hsp90 and its co-chaperones FKBP4 and CDC37, which is essential for chaperone function. Mediates sequential phosphorylation of FNIP1, promoting its gradual interaction with Hsp90, leading to activate both kinase and non-kinase client proteins of Hsp90. Regulates Wnt signaling by phosphorylating CTNNB1 and the transcription factor LEF1. Acts as an ectokinase that phosphorylates several extracellular proteins. Phosphorylates PML at 'Ser-565' and primes it for ubiquitin-mediated degradation. Plays an important role in the circadian clock function by phosphorylating BMAL1 at 'Ser-90' which is pivotal for its interaction with CLOCK and which controls CLOCK nuclear entry. Phosphorylates FMR1, promoting FMR1-dependent formation of a membraneless compartment. May phosphorylate histone H2A on 'Ser-1'. This Mus musculus (Mouse) protein is Casein kinase II subunit alpha (Csnk2a1).